Reading from the N-terminus, the 316-residue chain is MTEQMTLRGTLQGHGGWVTQIATTPQYPDMILSASRDKSLIVWRLTRDESSYGVPQKSLHGHGHFVSDVILSSDGQFALSGSWDHTLRLWDLSTGQTTRRFVGHTKDVLSVAFSADNRQIVSGSRDKTIKLWNTLGVCKYTIQDDCHTDWTSCVRFSPNTQNPIIVSSGWDRLVKVWNLTNCKLKTNHYGHTGYVNTVTVSPDGSLCASGGKDSQAMLWDLNEGKHLYTLDGAGDTINALCFSPNRYWLCVASGPSIKIWDLEGKVVVDELKPEVMGTTSKAPTCLSLAWSADGQTLFAGYTDKLIRVWQVSMVSR.

WD repeat units lie at residues 4–46, 52–93, 94–135, 137–180, 181–221, 222–263, and 264–312; these read QMTL…WRLT, YGVP…WDLS, TGQT…WNTL, VCKY…WNLT, NCKL…LWDL, NEGK…WDLE, and GKVV…WQVS.

This sequence belongs to the WD repeat G protein beta family. Ribosomal protein RACK1 subfamily.

This is Small ribosomal subunit protein RACK1 from Biomphalaria glabrata (Bloodfluke planorb).